We begin with the raw amino-acid sequence, 1063 residues long: JmjC domain-containing histone demethylation protein 1 (1063 aa).

The JmjC domain occupies 86–266 (LYNVLSLEYS…TQLRVYQVEN (181 aa)). T160 contacts substrate. Residues H163 and D165 each coordinate Fe cation. K180 serves as a coordination point for substrate. H234 lines the Fe cation pocket. Residues 379-389 (GLEEEAEDEDV) show a composition bias toward acidic residues. Disordered stretches follow at residues 379–400 (GLEEEAEDEDVKPETKKEAEER), 554–750 (ESDE…NPYN), and 776–1040 (VELH…KRAK). The span at 390–400 (KPETKKEAEER) shows a compositional bias: basic and acidic residues. 2 stretches are compositionally biased toward acidic residues: residues 594 to 605 (PEYDEDMEEYDP) and 613 to 631 (ELEEEEEEEEGEEEEEEEY). Positions 636–646 (TRRSSTRGSAS) are enriched in low complexity. 5 stretches are compositionally biased toward basic and acidic residues: residues 647–665 (TKEEPQEEKEEKEAAPKKE), 674–712 (EKSSKPEKDTTEAKLKKEKKKKEMERRLRDSELEAELRA), 776–806 (VELHIEKNLYKLEPKRDESESREPSMEHEDS), 813–835 (PYDRYSHYHTENSHFQEDQDSHR), and 892–902 (EPRRSNDRRTS). Low complexity predominate over residues 926–937 (AEAASASSSRHS). Polar residues-rich tracts occupy residues 950–963 (LNSSRHSSTDTPMY) and 973–982 (WLPNTSNVTR). Positions 1005–1016 (PPFPRSITPPPV) are enriched in pro residues. The span at 1020–1030 (ELKSQSNGRKS) shows a compositional bias: polar residues. Over residues 1031-1040 (NYSEDGKRAK) the composition is skewed to basic and acidic residues.

The protein belongs to the JHDM1 histone demethylase family. Fe(2+) serves as cofactor.

It is found in the nucleus. The enzyme catalyses N(6),N(6)-dimethyl-L-lysyl(36)-[histone H3] + 2 2-oxoglutarate + 2 O2 = L-lysyl(36)-[histone H3] + 2 formaldehyde + 2 succinate + 2 CO2. In terms of biological role, histone demethylase that specifically demethylates 'Lys-36' of histone H3, thereby playing a central role in histone code. The polypeptide is JmjC domain-containing histone demethylation protein 1 (jhdm-1) (Caenorhabditis briggsae).